Here is a 438-residue protein sequence, read N- to C-terminus: Aspartate--tRNA(Asp/Asn) ligase (438 aa).

Residue glutamate 176 participates in L-aspartate binding. The tract at residues glutamine 198–lysine 201 is aspartate. Arginine 220 contacts L-aspartate. ATP is bound by residues arginine 220–glutamate 222, arginine 228–leucine 230, and glutamate 361. Mg(2+) is bound by residues glutamate 361 and serine 364. Residues serine 364 and arginine 368 each coordinate L-aspartate. Glycine 409–arginine 412 contributes to the ATP binding site.

Belongs to the class-II aminoacyl-tRNA synthetase family. Type 2 subfamily. As to quaternary structure, homodimer. Mg(2+) serves as cofactor.

The protein localises to the cytoplasm. The catalysed reaction is tRNA(Asx) + L-aspartate + ATP = L-aspartyl-tRNA(Asx) + AMP + diphosphate. In terms of biological role, aspartyl-tRNA synthetase with relaxed tRNA specificity since it is able to aspartylate not only its cognate tRNA(Asp) but also tRNA(Asn). Reaction proceeds in two steps: L-aspartate is first activated by ATP to form Asp-AMP and then transferred to the acceptor end of tRNA(Asp/Asn). The sequence is that of Aspartate--tRNA(Asp/Asn) ligase from Methanococcus maripaludis (strain DSM 14266 / JCM 13030 / NBRC 101832 / S2 / LL).